Reading from the N-terminus, the 172-residue chain is Small ribosomal subunit protein uS5 (172 aa).

The region spanning 17 to 80 (LREKMIAVNR…DEARRKMIKV (64 aa)) is the S5 DRBM domain.

Belongs to the universal ribosomal protein uS5 family. Part of the 30S ribosomal subunit. Contacts proteins S4 and S8.

Functionally, with S4 and S12 plays an important role in translational accuracy. Located at the back of the 30S subunit body where it stabilizes the conformation of the head with respect to the body. This is Small ribosomal subunit protein uS5 from Polynucleobacter asymbioticus (strain DSM 18221 / CIP 109841 / QLW-P1DMWA-1) (Polynucleobacter necessarius subsp. asymbioticus).